Here is a 657-residue protein sequence, read N- to C-terminus: uncharacterized protein (657 aa).

An N-terminal signal peptide occupies residues 1 to 26 (MFGKGLVKKSLLFFSGVSTMAVFLVS). A lipid anchor (N-palmitoyl cysteine) is attached at cysteine 27. The S-diacylglycerol cysteine moiety is linked to residue cysteine 27. 3 disordered regions span residues 291–316 (ISPK…FSST), 468–496 (RLSS…DGII), and 516–563 (KSMT…KETN). The span at 294 to 304 (KQGSDNNSNLS) shows a compositional bias: polar residues. Basic and acidic residues predominate over residues 469–495 (LSSDDTNTKKALKEVSTHKNGSDKDGI). Residues 516–525 (KSMTDNNSGT) are compositionally biased toward polar residues. A compositionally biased stretch (basic and acidic residues) spans 526–545 (EQKKNLSEVDTKKKEKESKG). Low complexity predominate over residues 546–559 (KTQSNGQDSGQQNG).

The protein to T.pallidum TmpC.

The protein resides in the cell membrane. This is an uncharacterized protein from Mycoplasma pneumoniae (strain ATCC 29342 / M129 / Subtype 1) (Mycoplasmoides pneumoniae).